Reading from the N-terminus, the 490-residue chain is MQFSTFQKNLDNWQGASLIFGVLEEEIASQLENIKFIVDPKLLLKKVTQKKFKGEKGETLSFEFLDQKLETLIIVGLGKSKYLNKSDIENSIGNLIRKTVDKNEKISILLPWELINSQLEINQLAESARLSAYKDNRFNKKKDEKKVLKEIEFLNFKSFENICFEEAEKICEGVELARRLVAAPPNSLTPQEMSMQASQIAKDHGLEVKILEAKECEDLGMGAYLAVAKGSDLDPKFIHLTLKSEGPIKEKIAIVGKGLTFDSGGYNLKVGASQIEMMKYDMGGSAAVLGAAKALGAIKPKGLEIHFIVAACENMINGSAVHPGDVVKASNGKTIEINNTDAEGRLTLADALTYASDLKPDSIIDLATLTGAIVVALGNDVAGFWSNNDDLANDLKAASAQAGEELWRMPLQKAYKEGLKSHIADMKNTGPRAGGSITAALFLEEFFDTEIKWAHIDIAGTCWTDKNKGINPSGATGFGVKTLVQWIKNK.

Residues Lys257 and Asp262 each coordinate Mn(2+). Lys269 is an active-site residue. Residues Asp281, Asp341, and Glu343 each contribute to the Mn(2+) site. The active site involves Arg345.

This sequence belongs to the peptidase M17 family. It depends on Mn(2+) as a cofactor.

It localises to the cytoplasm. The catalysed reaction is Release of an N-terminal amino acid, Xaa-|-Yaa-, in which Xaa is preferably Leu, but may be other amino acids including Pro although not Arg or Lys, and Yaa may be Pro. Amino acid amides and methyl esters are also readily hydrolyzed, but rates on arylamides are exceedingly low.. It carries out the reaction Release of an N-terminal amino acid, preferentially leucine, but not glutamic or aspartic acids.. Functionally, presumably involved in the processing and regular turnover of intracellular proteins. Catalyzes the removal of unsubstituted N-terminal amino acids from various peptides. In Prochlorococcus marinus (strain MIT 9312), this protein is Probable cytosol aminopeptidase.